The following is a 93-amino-acid chain: uncharacterized protein (93 aa).

The stretch at 36–69 forms a coiled coil; sequence SEERLLSRLFEEMDELREAVEKEDWENLRDELLD.

This is an uncharacterized protein from Archaeoglobus fulgidus (strain ATCC 49558 / DSM 4304 / JCM 9628 / NBRC 100126 / VC-16).